Consider the following 509-residue polypeptide: Proto-oncogene tyrosine-protein kinase LCK (509 aa).

G2 carries N-myristoyl glycine lipidation. The interactions with CD4 and CD8 stretch occupies residues 2-72 (GCVCSSNPED…DNLVIALHSY (71 aa)). S-palmitoyl cysteine attachment occurs at residues C3 and C5. Residues 61-121 (LQDNLVIALH…PFNFVAKANS (61 aa)) enclose the SH3 domain. A Glycyl lysine isopeptide (Lys-Gly) (interchain with G-Cter in ubiquitin) cross-link involves residue K99. At S102 the chain carries Phosphoserine. One can recognise an SH2 domain in the interval 127-224 (WFFKNLSRKD…GLCTKLSRPC (98 aa)). The segment at 154-242 (RESESTAGSF…WWEDEWEVPR (89 aa)) is interaction with PTPRH. Phosphothreonine is present on T159. S162 bears the Phosphoserine mark. Y192 bears the Phosphotyrosine mark. Residue S194 is modified to Phosphoserine. The 254-residue stretch at 245–498 (LKLVERLGAG…YLRSVLDDFF (254 aa)) folds into the Protein kinase domain. ATP is bound by residues 251–259 (LGAGQFGEV) and K273. K276 participates in a covalent cross-link: Glycyl lysine isopeptide (Lys-Gly) (interchain with G-Cter in ubiquitin). Residue D364 is the Proton acceptor of the active site. Y394 is modified (phosphotyrosine; by autocatalysis). At Y505 the chain carries Phosphotyrosine.

It belongs to the protein kinase superfamily. Tyr protein kinase family. SRC subfamily. As to quaternary structure, binds to the cytoplasmic domain of cell surface receptors, such as AXL, CD2, CD4, CD5, CD8, CD44, CD45 and CD122. Also binds to effector molecules, such as PI4K, VAV1, RASA1, FYB1 and to other protein kinases including CDK1, RAF1, ZAP70 and SYK. Binds to phosphatidylinositol 3'-kinase (PI3K) from T-lymphocytes through its SH3 domain and to the tyrosine phosphorylated form of KHDRBS1/p70 through its SH2 domain. Interacts with SQSTM1. Interacts with phosphorylated LIME1. Interacts with CBLB and PTPRH. Interacts with RUNX3. Forms a signaling complex with EPHA1, PTK2B and PI3-KINASE; upon activation by EFNA1 which may regulate T-lymphocytes migration. Associates with ZAP70 and RHOH; these interactions allow LCK-mediated RHOH and CD3 subunit phosphorylations in presence of a functional ZAP70. Interacts with CEACAM1 (via cytoplasmic domain); mediates CEACAM1 phosphorylation resulting in PTPN6 recruitment that dephosphorylates TCR stimulation-induced CD247 and ZAP70. Interacts with FYB2. Interacts with CD160. Interacts with CD48. In terms of processing, autophosphorylated on Tyr-394, increasing enzymatic activity, this site is dephosphorylated by PTN22. Phosphorylated on Tyr-505 by CSK, decreasing activity. Dephosphorylated by PTPRC/CD45. Dephosphorylation at Tyr-394 by PTPN2 negatively regulates T-cells differentiation. Dephosphorylation at Tyr-394 by DUSP22 negatively regulates T-cell receptor signaling. Myristoylation is required prior to palmitoylation. Post-translationally, palmitoylation regulates association with the plasma membrane and could be mediated by ZDHHC2. In terms of processing, 'Lys-63'-linked ubiquitinated at Lys-99 and Lys-276 by UBR2; this modification is required for autophosphorylation at Tyr-394.

It localises to the cell membrane. It is found in the cytoplasm. The protein localises to the cytosol. It carries out the reaction L-tyrosyl-[protein] + ATP = O-phospho-L-tyrosyl-[protein] + ADP + H(+). The relative activities of the inhibitory tyrosine-protein kinase CSK and the activating tyrosine-protein phosphatase PTPRC/CD45 determine the level of LCK activity. These interactions allow rapid and efficient activation of LCK in response to TCR stimulation. In terms of biological role, non-receptor tyrosine-protein kinase that plays an essential role in the selection and maturation of developing T-cells in the thymus and in the function of mature T-cells. Plays a key role in T-cell antigen receptor (TCR)-linked signal transduction pathways. Constitutively associated with the cytoplasmic portions of the CD4 and CD8 surface receptors. Association of the TCR with a peptide antigen-bound MHC complex facilitates the interaction of CD4 and CD8 with MHC class II and class I molecules, respectively, thereby recruiting the associated LCK protein to the vicinity of the TCR/CD3 complex. LCK then phosphorylates tyrosine residues within the immunoreceptor tyrosine-based activation motifs (ITAM) of the cytoplasmic tails of the TCR-gamma chains and CD3 subunits, initiating the TCR/CD3 signaling pathway. Once stimulated, the TCR recruits the tyrosine kinase ZAP70, that becomes phosphorylated and activated by LCK. Following this, a large number of signaling molecules are recruited, ultimately leading to lymphokine production. LCK also contributes to signaling by other receptor molecules. Associates directly with the cytoplasmic tail of CD2, which leads to hyperphosphorylation and activation of LCK. Also plays a role in the IL2 receptor-linked signaling pathway that controls the T-cell proliferative response. Binding of IL2 to its receptor results in increased activity of LCK. Is expressed at all stages of thymocyte development and is required for the regulation of maturation events that are governed by both pre-TCR and mature alpha beta TCR. Phosphorylates other substrates including RUNX3, PTK2B/PYK2, the microtubule-associated protein MAPT, RHOH or TYROBP. Interacts with UNC119; this interaction plays a crucial role in activation of LCK. This is Proto-oncogene tyrosine-protein kinase LCK (Lck) from Rattus norvegicus (Rat).